A 286-amino-acid polypeptide reads, in one-letter code: Urease accessory protein UreD 2 (286 aa).

The protein belongs to the UreD family. As to quaternary structure, ureD, UreF and UreG form a complex that acts as a GTP-hydrolysis-dependent molecular chaperone, activating the urease apoprotein by helping to assemble the nickel containing metallocenter of UreC. The UreE protein probably delivers the nickel.

The protein resides in the cytoplasm. Its function is as follows. Required for maturation of urease via the functional incorporation of the urease nickel metallocenter. The protein is Urease accessory protein UreD 2 of Bradyrhizobium sp. (strain BTAi1 / ATCC BAA-1182).